Consider the following 435-residue polypeptide: Nucleoredoxin (435 aa).

Ser2 bears the N-acetylserine mark. The Thioredoxin domain maps to 167–321 (PKPFREVIAG…VLELSDSNAA (155 aa)).

It belongs to the nucleoredoxin family. In terms of assembly, associates with the phosphatase 2A holoenzyme. Interacts with PPP2CA; the interaction is direct. Interacts with DVL1 (via PDZ domain); the interaction is direct and regulated by oxidative stress.

The protein localises to the cytoplasm. It localises to the cytosol. Its subcellular location is the nucleus. It carries out the reaction [protein]-dithiol + NAD(+) = [protein]-disulfide + NADH + H(+). The enzyme catalyses [protein]-dithiol + NADP(+) = [protein]-disulfide + NADPH + H(+). Functions as a redox-dependent negative regulator of the Wnt signaling pathway, possibly by preventing ubiquitination of DVL3 by the BCR(KLHL12) complex. May also function as a transcriptional regulator act as a regulator of protein phosphatase 2A (PP2A). The protein is Nucleoredoxin (NXN) of Homo sapiens (Human).